A 590-amino-acid chain; its full sequence is Leishmanolysin (590 aa).

A signal peptide spans 1–39; the sequence is MSVDSSSTHRHRSVAARLVRLAAAGAAVIAAVGTAAAWA. The propeptide at 40–87 is activation peptide; sequence HAGAVQHRCIHDAMQARVRQSVARHHTAPGAVSAVGLSYVTLGAAPTV. 2 disulfides stabilise this stretch: Cys-112–Cys-129 and Cys-178–Cys-217. His-251 contributes to the Zn(2+) binding site. Residue Glu-252 is part of the active site. A Zn(2+)-binding site is contributed by His-255. Asn-287 carries an N-linked (GlcNAc...) asparagine glycan. Intrachain disulfides connect Cys-301–Cys-373, Cys-380–Cys-443, Cys-393–Cys-412, Cys-402–Cys-477, Cys-454–Cys-498, Cys-503–Cys-553, and Cys-523–Cys-546. His-321 contributes to the Zn(2+) binding site. Asn-565 carries the GPI-anchor amidated asparagine lipid modification. The propeptide at 566–590 is removed in mature form; sequence AAAGRRGPRAAATALLVAALLAVAL.

This sequence belongs to the peptidase M8 family. Zn(2+) is required as a cofactor.

Its subcellular location is the cell membrane. It catalyses the reaction Preference for hydrophobic residues at P1 and P1' and basic residues at P2' and P3'. A model nonapeptide is cleaved at -Ala-Tyr-|-Leu-Lys-Lys-.. Has an integral role during the infection of macrophages in the mammalian host. The protein is Leishmanolysin (gp63) of Leishmania donovani.